Reading from the N-terminus, the 289-residue chain is MYB transcription factor 69 (289 aa).

HTH myb-type domains lie at 9-61 and 62-116; these read KAGV…TNYL and RPGI…KKKL. 2 consecutive DNA-binding regions (H-T-H motif) follow at residues 37–61 and 89–112; these read WRAVPVSTGLMRCSKSCRLRWTNYL and WAAIASYLPQRTDNDIKNYWNTHL. Disordered stretches follow at residues 127 to 162 and 225 to 252; these read APPRPSEPTAGHADCRRHDMTRSSKDSHAACPADST and SSAIDIDPFDHKSGGAALPPPKKRQQQQ. Over residues 139–154 the composition is skewed to basic and acidic residues; the sequence is ADCRRHDMTRSSKDSH.

Mainly expressed in highly lignified tissues such as vascular tissues.

Its subcellular location is the nucleus. Transcription factor that binds to the promoter of MYB31 and MYB42 and activates directly their expression, thus repressing lignin biosynthesis. This Zea mays (Maize) protein is MYB transcription factor 69.